The following is a 339-amino-acid chain: Erlin-2 (339 aa).

Over 1-3 (MAQ) the chain is Cytoplasmic. A helical membrane pass occupies residues 4–24 (LGAVVAVASSFFCASLFSAVH). The Extracellular segment spans residues 25–339 (KIEEGHIGVY…EPLETATKDN (315 aa)). Residue Asn-106 is glycosylated (N-linked (GlcNAc...) asparagine). The segment at 177–309 (EAIRRNYELM…DIPNMFMDSA (133 aa)) is interaction with ERLIN1. Residue Lys-267 is modified to N6-acetyllysine.

The protein belongs to the band 7/mec-2 family. In terms of assembly, forms a heteromeric complex with ERLIN1. In complex with ERLIN1, interacts with RNF170. Interacts with activated ITPR1, independently of the degree of ITPR1 polyubiquitination. Interacts with SCAP, INSIG1, SREBF1 and SREBF2 under cholesterol sufficiency conditions; indicative for an association with the SCAP-SREBP-INSIG complex. Probably part of an AMFR/gp78 and INSIG1-containing ubiquitin ligase complex involved in ERAD of HMGCR. Interacts with TMUB1; TMUB1 bridges the association with AMFR. Interacts with SYVN1 and RNF139. Interacts with TMEM259. Interacts with TMEM41B. Post-translationally, deubiquitinated by USP25; leading to stabilization.

The protein localises to the endoplasmic reticulum membrane. Its function is as follows. Component of the ERLIN1/ERLIN2 complex which mediates the endoplasmic reticulum-associated degradation (ERAD) of inositol 1,4,5-trisphosphate receptors (IP3Rs) such as ITPR1. Promotes sterol-accelerated ERAD of HMGCR probably implicating an AMFR/gp78-containing ubiquitin ligase complex. Involved in regulation of cellular cholesterol homeostasis by regulation the SREBP signaling pathway. May promote ER retention of the SCAP-SREBF complex. In Rattus norvegicus (Rat), this protein is Erlin-2.